Reading from the N-terminus, the 431-residue chain is Enolase (431 aa).

Position 166 (Q166) interacts with (2R)-2-phosphoglycerate. Residue E208 is the Proton donor of the active site. Positions 245, 288, and 315 each coordinate Mg(2+). Residues K340, R369, S370, and K391 each coordinate (2R)-2-phosphoglycerate. K340 acts as the Proton acceptor in catalysis.

Belongs to the enolase family. The cofactor is Mg(2+).

It localises to the cytoplasm. It is found in the secreted. Its subcellular location is the cell surface. The enzyme catalyses (2R)-2-phosphoglycerate = phosphoenolpyruvate + H2O. It functions in the pathway carbohydrate degradation; glycolysis; pyruvate from D-glyceraldehyde 3-phosphate: step 4/5. Its function is as follows. Catalyzes the reversible conversion of 2-phosphoglycerate (2-PG) into phosphoenolpyruvate (PEP). It is essential for the degradation of carbohydrates via glycolysis. The chain is Enolase from Clostridium botulinum (strain 657 / Type Ba4).